Consider the following 387-residue polypeptide: Acetylajmalan esterase (387 aa).

Positions 1–22 (MGFARLLHLVFSLLVFAGITNG) are cleaved as a signal peptide. Serine 36 (nucleophile) is an active-site residue. N-linked (GlcNAc...) asparagine glycans are attached at residues asparagine 98, asparagine 180, asparagine 199, asparagine 249, and asparagine 296. Active-site residues include aspartate 337 and histidine 340.

Belongs to the 'GDSL' lipolytic enzyme family.

The catalysed reaction is 17-O-acetylajmaline + H2O = ajmaline + acetate + H(+). The enzyme catalyses 17-O-acetylnorajmaline + H2O = norajmaline + acetate + H(+). The protein operates within alkaloid biosynthesis; ajmaline biosynthesis. Its function is as follows. Acetylesterase involved in the biosynthesis of ajmaline-type monoterpenoid indole alkaloids (MIAs) natural products, important plant-derived pharmaceuticals used in the therapy of heart disorders. Deacetylates 17-O-acetylajmaline and 17-O-acetylnorajmaline to produce ajmaline and norajmaline, but is inactive toward other acetylated alkaloids. This chain is Acetylajmalan esterase, found in Rauvolfia serpentina (Serpentine wood).